A 112-amino-acid polypeptide reads, in one-letter code: Large ribosomal subunit protein P2 (112 aa).

The disordered stretch occupies residues 81 to 112; the sequence is VETAEAKKEDKKEEKKEEEEEEEDDLGFSLFG. Residues 84–95 show a composition bias toward basic and acidic residues; it reads AEAKKEDKKEEK. The span at 96–106 shows a compositional bias: acidic residues; it reads KEEEEEEEDDL.

This sequence belongs to the eukaryotic ribosomal protein P1/P2 family. As to quaternary structure, P1 and P2 exist as dimers at the large ribosomal subunit. In terms of processing, phosphorylated.

Functionally, plays an important role in the elongation step of protein synthesis. The chain is Large ribosomal subunit protein P2 (MAL3P3.19) from Plasmodium falciparum (isolate 3D7).